We begin with the raw amino-acid sequence, 384 residues long: Anhydro-N-acetylmuramic acid kinase (384 aa).

9-16 (GTSVDGID) is an ATP binding site.

Belongs to the anhydro-N-acetylmuramic acid kinase family.

It catalyses the reaction 1,6-anhydro-N-acetyl-beta-muramate + ATP + H2O = N-acetyl-D-muramate 6-phosphate + ADP + H(+). It participates in amino-sugar metabolism; 1,6-anhydro-N-acetylmuramate degradation. The protein operates within cell wall biogenesis; peptidoglycan recycling. Its function is as follows. Catalyzes the specific phosphorylation of 1,6-anhydro-N-acetylmuramic acid (anhMurNAc) with the simultaneous cleavage of the 1,6-anhydro ring, generating MurNAc-6-P. Is required for the utilization of anhMurNAc either imported from the medium or derived from its own cell wall murein, and thus plays a role in cell wall recycling. This chain is Anhydro-N-acetylmuramic acid kinase, found in Rippkaea orientalis (strain PCC 8801 / RF-1) (Cyanothece sp. (strain PCC 8801)).